The sequence spans 93 residues: Pyrimidine/purine nucleoside phosphorylase (93 aa).

This sequence belongs to the nucleoside phosphorylase PpnP family.

It catalyses the reaction a purine D-ribonucleoside + phosphate = a purine nucleobase + alpha-D-ribose 1-phosphate. It carries out the reaction adenosine + phosphate = alpha-D-ribose 1-phosphate + adenine. The catalysed reaction is cytidine + phosphate = cytosine + alpha-D-ribose 1-phosphate. The enzyme catalyses guanosine + phosphate = alpha-D-ribose 1-phosphate + guanine. It catalyses the reaction inosine + phosphate = alpha-D-ribose 1-phosphate + hypoxanthine. It carries out the reaction thymidine + phosphate = 2-deoxy-alpha-D-ribose 1-phosphate + thymine. The catalysed reaction is uridine + phosphate = alpha-D-ribose 1-phosphate + uracil. The enzyme catalyses xanthosine + phosphate = alpha-D-ribose 1-phosphate + xanthine. Functionally, catalyzes the phosphorolysis of diverse nucleosides, yielding D-ribose 1-phosphate and the respective free bases. Can use uridine, adenosine, guanosine, cytidine, thymidine, inosine and xanthosine as substrates. Also catalyzes the reverse reactions. This is Pyrimidine/purine nucleoside phosphorylase from Vibrio atlanticus (strain LGP32) (Vibrio splendidus (strain Mel32)).